A 243-amino-acid chain; its full sequence is UPF0246 protein spyM18_2163 (243 aa).

This sequence belongs to the UPF0246 family.

This Streptococcus pyogenes serotype M18 (strain MGAS8232) protein is UPF0246 protein spyM18_2163.